We begin with the raw amino-acid sequence, 400 residues long: Riboflavin biosynthesis protein RibBA (400 aa).

The DHBP synthase stretch occupies residues Met-1–Arg-202. D-ribulose 5-phosphate contacts are provided by residues Arg-28–Glu-29, Asp-33, Arg-141–Thr-145, and Glu-165. Glu-29 lines the Mg(2+) pocket. His-144 is a binding site for Mg(2+). Residues Thr-203–Gly-400 form a GTP cyclohydrolase II region. Position 253–257 (Arg-253–Glu-257) interacts with GTP. Zn(2+) is bound by residues Cys-258, Cys-269, and Cys-271. GTP-binding positions include Gln-274, Glu-297 to Arg-299, and Thr-319. The active-site Proton acceptor; for GTP cyclohydrolase activity is the Asp-331. Catalysis depends on Arg-333, which acts as the Nucleophile; for GTP cyclohydrolase activity. Residues Thr-354 and Lys-359 each coordinate GTP.

It in the N-terminal section; belongs to the DHBP synthase family. This sequence in the C-terminal section; belongs to the GTP cyclohydrolase II family. The cofactor is Mg(2+). It depends on Mn(2+) as a cofactor. Requires Zn(2+) as cofactor.

It carries out the reaction D-ribulose 5-phosphate = (2S)-2-hydroxy-3-oxobutyl phosphate + formate + H(+). The catalysed reaction is GTP + 4 H2O = 2,5-diamino-6-hydroxy-4-(5-phosphoribosylamino)-pyrimidine + formate + 2 phosphate + 3 H(+). It functions in the pathway cofactor biosynthesis; riboflavin biosynthesis; 2-hydroxy-3-oxobutyl phosphate from D-ribulose 5-phosphate: step 1/1. The protein operates within cofactor biosynthesis; riboflavin biosynthesis; 5-amino-6-(D-ribitylamino)uracil from GTP: step 1/4. Catalyzes the conversion of D-ribulose 5-phosphate to formate and 3,4-dihydroxy-2-butanone 4-phosphate. Functionally, catalyzes the conversion of GTP to 2,5-diamino-6-ribosylamino-4(3H)-pyrimidinone 5'-phosphate (DARP), formate and pyrophosphate. The chain is Riboflavin biosynthesis protein RibBA from Salinispora tropica (strain ATCC BAA-916 / DSM 44818 / JCM 13857 / NBRC 105044 / CNB-440).